A 1330-amino-acid chain; its full sequence is Protein PUTATIVE RECOMBINATION INITIATION DEFECT 1 (1330 aa).

Residues Arg1310–Val1330 form a disordered region.

Interacts with SPO11-1. According to PubMed:28855712, may interact with SPO11-2; this is in contradiction with PubMed:9461215 which claims that it seems to not interact with SPO11-2. Binds to DFO, PRD3 and MTOPVIB. Facilitates an interaction between PRD3 and DFO. In terms of tissue distribution, expressed in flower buds.

The protein localises to the nucleus. In terms of biological role, involved in DNA cleavage that forms the double-strand breaks (DSB) that initiate meiotic recombination. This is Protein PUTATIVE RECOMBINATION INITIATION DEFECT 1 from Arabidopsis thaliana (Mouse-ear cress).